Reading from the N-terminus, the 186-residue chain is ATP synthase subunit delta (186 aa).

Belongs to the ATPase delta chain family. In terms of assembly, F-type ATPases have 2 components, F(1) - the catalytic core - and F(0) - the membrane proton channel. F(1) has five subunits: alpha(3), beta(3), gamma(1), delta(1), epsilon(1). CF(0) has four main subunits: a(1), b(1), b'(1) and c(10-14). The alpha and beta chains form an alternating ring which encloses part of the gamma chain. F(1) is attached to F(0) by a central stalk formed by the gamma and epsilon chains, while a peripheral stalk is formed by the delta, b and b' chains.

It localises to the cell inner membrane. In terms of biological role, f(1)F(0) ATP synthase produces ATP from ADP in the presence of a proton or sodium gradient. F-type ATPases consist of two structural domains, F(1) containing the extramembraneous catalytic core and F(0) containing the membrane proton channel, linked together by a central stalk and a peripheral stalk. During catalysis, ATP synthesis in the catalytic domain of F(1) is coupled via a rotary mechanism of the central stalk subunits to proton translocation. Its function is as follows. This protein is part of the stalk that links CF(0) to CF(1). It either transmits conformational changes from CF(0) to CF(1) or is implicated in proton conduction. The polypeptide is ATP synthase subunit delta (Cereibacter sphaeroides (strain ATCC 17025 / ATH 2.4.3) (Rhodobacter sphaeroides)).